Consider the following 197-residue polypeptide: Protein GrpE (197 aa).

Positions 1–27 are enriched in basic and acidic residues; that stretch reads MTKQEKAENQEKPTEETVEETPKKETP. The interval 1 to 50 is disordered; sequence MTKQEKAENQEKPTEETVEETPKKETPFEPVMEADEVEETTEAQAPVEEA. The span at 32 to 41 shows a compositional bias: acidic residues; it reads MEADEVEETT.

The protein belongs to the GrpE family. As to quaternary structure, homodimer.

It is found in the cytoplasm. In terms of biological role, participates actively in the response to hyperosmotic and heat shock by preventing the aggregation of stress-denatured proteins, in association with DnaK and GrpE. It is the nucleotide exchange factor for DnaK and may function as a thermosensor. Unfolded proteins bind initially to DnaJ; upon interaction with the DnaJ-bound protein, DnaK hydrolyzes its bound ATP, resulting in the formation of a stable complex. GrpE releases ADP from DnaK; ATP binding to DnaK triggers the release of the substrate protein, thus completing the reaction cycle. Several rounds of ATP-dependent interactions between DnaJ, DnaK and GrpE are required for fully efficient folding. The protein is Protein GrpE of Latilactobacillus sakei (Lactobacillus sakei).